The chain runs to 486 residues: Homoserine O-acetyltransferase (486 aa).

In terms of domain architecture, AB hydrolase-1 spans 66-436 (NVLVICHALT…PEGHDAFLLE (371 aa)). Ser-162 is a catalytic residue. The Nucleophile role is filled by Ser-162. The interval 248–274 (KFSRRSPSIAQQQKAQKAEVRKPSTVS) is disordered. Residues 250-262 (SRRSPSIAQQQKA) show a composition bias toward polar residues. Active-site residues include Asp-401 and His-430.

It belongs to the AB hydrolase superfamily. MetX family.

It catalyses the reaction L-homoserine + acetyl-CoA = O-acetyl-L-homoserine + CoA. It participates in amino-acid biosynthesis; L-methionine biosynthesis via de novo pathway; O-acetyl-L-homoserine from L-homoserine: step 1/1. In terms of biological role, commits homoserine to the methionine biosynthesis pathway by catalyzing its O-acetylation. The polypeptide is Homoserine O-acetyltransferase (MET2) (Saccharomyces pastorianus (Lager yeast)).